A 376-amino-acid chain; its full sequence is Delta(12) fatty acid desaturase fat-2 (376 aa).

4 consecutive transmembrane segments (helical) span residues 45–65 (ISYL…VPYI), 69–89 (LGWI…SALF), 203–223 (VKCA…FVLC), and 228–248 (YTFV…LVII).

It belongs to the fatty acid desaturase type 1 family.

It localises to the membrane. The catalysed reaction is (9Z)-octadecenoyl-CoA + 2 Fe(II)-[cytochrome b5] + O2 + 2 H(+) = (9Z,12Z)-octadecadienoyl-CoA + 2 Fe(III)-[cytochrome b5] + 2 H2O. The enzyme catalyses (9Z)-hexadecenoyl-CoA + 2 Fe(II)-[cytochrome b5] + O2 + 2 H(+) = (9Z,12Z)-hexadecadienoyl-CoA + 2 Fe(III)-[cytochrome b5] + 2 H2O. It carries out the reaction (9Z,12Z)-octadecadienoyl-CoA + 2 Fe(II)-[cytochrome b5] + O2 + 2 H(+) = (9Z,12Z,15Z)-octadecatrienoyl-CoA + 2 Fe(III)-[cytochrome b5] + 2 H2O. It catalyses the reaction (9Z)-heptadecenoyl-CoA + 2 Fe(II)-[cytochrome b5] + O2 + 2 H(+) = (9Z,12Z)-heptadecadienoyl-CoA + 2 Fe(III)-[cytochrome b5] + 2 H2O. The catalysed reaction is (9Z)-pentadecenoyl-CoA + 2 Fe(II)-[cytochrome b5] + O2 + 2 H(+) = (9Z,12Z)-pentadecadienoyl-CoA + 2 Fe(III)-[cytochrome b5] + 2 H2O. The enzyme catalyses (6Z,9Z,12Z)-octadecatrienoyl-CoA + 2 Fe(II)-[cytochrome b5] + O2 + 2 H(+) = (6Z,9Z,12Z,15Z)-octadecatetraenoyl-CoA + 2 Fe(III)-[cytochrome b5] + 2 H2O. It carries out the reaction (9Z)-tetradecenoyl-CoA + 2 Fe(II)-[cytochrome b5] + O2 + 2 H(+) = (9Z,12Z)-tetradecadienoyl-CoA + 2 Fe(III)-[cytochrome b5] + 2 H2O. The protein operates within lipid metabolism; polyunsaturated fatty acid biosynthesis. In terms of biological role, can function as a Delta(12)/Delta(15) bifunctional desaturase and behaves as a nu +3' desaturase. Introduces a double bond in the fatty acid chain three carbons away from an existing double bond to biosynthesize polyunsaturated fatty acids (PUFAs) endogenously (PUFAs are essential for membrane structure and many cellular and physiological processes). Acts on a number of substrates like oleoyl-CoA ((9Z)-octadecenoyl-CoA, 18:1n-9), palmitoleoyl-CoA ((9Z)-hexadecenoyl-CoA, 16:1n-7), and gamma-linolenoyl-CoA ((6Z,9Z,12Z)-octadecatrienoyl-CoA, 18:3n-6), to generate linoleoyl-CoA ((9Z,12Z)-octadecadienoyl-CoA, 18:2n-6), (9Z,12Z)-hexadecadienoyl-CoA (16:2n-4) and (6Z,9Z,12Z,15Z)-octadecatetraenoyl-CoA (18:4n-3) respectively. Unlike plants, Caenorhabditis elegans desaturases seem to use fatty acyl-CoAs as substrates. In Caenorhabditis elegans, this protein is Delta(12) fatty acid desaturase fat-2 (fat-2).